The primary structure comprises 195 residues: UMP-CMP kinase (195 aa).

17–22 (GSGKGT) is a binding site for ATP. The NMP stretch occupies residues 37–66 (SAGDLLRQEQQSGSKDGEMIATMIKNGEIV). Residues R43, 64-66 (EIV), and 91-94 (GFPR) each bind a ribonucleoside 5'-phosphate. N98 lines the CMP pocket. Residues 131 to 141 (KRGESSGRSDD) form an LID region. Residue R132 participates in ATP binding. A ribonucleoside 5'-phosphate contacts are provided by R138 and R149. Residue R177 participates in ATP binding.

Belongs to the adenylate kinase family. UMP-CMP kinase subfamily. In terms of assembly, monomer. It depends on Mg(2+) as a cofactor.

It is found in the cytoplasm. The protein localises to the nucleus. The enzyme catalyses CMP + ATP = CDP + ADP. It carries out the reaction dCMP + ATP = dCDP + ADP. It catalyses the reaction UMP + ATP = UDP + ADP. Catalyzes the phosphorylation of pyrimidine nucleoside monophosphates at the expense of ATP. Plays an important role in de novo pyrimidine nucleotide biosynthesis. Has preference for UMP and CMP as phosphate acceptors. The protein is UMP-CMP kinase of Dictyostelium discoideum (Social amoeba).